We begin with the raw amino-acid sequence, 299 residues long: Sulfate adenylyltransferase subunit 2 (299 aa).

Belongs to the PAPS reductase family. CysD subfamily. In terms of assembly, heterodimer composed of CysD, the smaller subunit, and CysN.

It catalyses the reaction sulfate + ATP + H(+) = adenosine 5'-phosphosulfate + diphosphate. Its pathway is sulfur metabolism; hydrogen sulfide biosynthesis; sulfite from sulfate: step 1/3. Functionally, with CysN forms the ATP sulfurylase (ATPS) that catalyzes the adenylation of sulfate producing adenosine 5'-phosphosulfate (APS) and diphosphate, the first enzymatic step in sulfur assimilation pathway. APS synthesis involves the formation of a high-energy phosphoric-sulfuric acid anhydride bond driven by GTP hydrolysis by CysN coupled to ATP hydrolysis by CysD. The polypeptide is Sulfate adenylyltransferase subunit 2 (Colwellia psychrerythraea (strain 34H / ATCC BAA-681) (Vibrio psychroerythus)).